Here is an 87-residue protein sequence, read N- to C-terminus: Small ribosomal subunit protein uS17 (87 aa).

This sequence belongs to the universal ribosomal protein uS17 family. Part of the 30S ribosomal subunit.

Its function is as follows. One of the primary rRNA binding proteins, it binds specifically to the 5'-end of 16S ribosomal RNA. This is Small ribosomal subunit protein uS17 from Dichelobacter nodosus (strain VCS1703A).